The chain runs to 317 residues: Ribosomal protein L11 methyltransferase (317 aa).

S-adenosyl-L-methionine is bound by residues Thr169, Gly190, Asp211, and Asn256.

It belongs to the methyltransferase superfamily. PrmA family.

The protein localises to the cytoplasm. It catalyses the reaction L-lysyl-[protein] + 3 S-adenosyl-L-methionine = N(6),N(6),N(6)-trimethyl-L-lysyl-[protein] + 3 S-adenosyl-L-homocysteine + 3 H(+). In terms of biological role, methylates ribosomal protein L11. The chain is Ribosomal protein L11 methyltransferase from Helicobacter hepaticus (strain ATCC 51449 / 3B1).